The sequence spans 459 residues: Argininosuccinate lyase (459 aa).

Belongs to the lyase 1 family. Argininosuccinate lyase subfamily.

The protein resides in the cytoplasm. The catalysed reaction is 2-(N(omega)-L-arginino)succinate = fumarate + L-arginine. Its pathway is amino-acid biosynthesis; L-arginine biosynthesis; L-arginine from L-ornithine and carbamoyl phosphate: step 3/3. The sequence is that of Argininosuccinate lyase from Staphylococcus aureus (strain USA300).